The following is a 353-amino-acid chain: Alanine racemase (353 aa).

K34 acts as the Proton acceptor; specific for D-alanine in catalysis. K34 is subject to N6-(pyridoxal phosphate)lysine. Residue R128 coordinates substrate. Y251 serves as the catalytic Proton acceptor; specific for L-alanine. Position 299 (M299) interacts with substrate.

Belongs to the alanine racemase family. Pyridoxal 5'-phosphate is required as a cofactor.

The enzyme catalyses L-alanine = D-alanine. It participates in amino-acid biosynthesis; D-alanine biosynthesis; D-alanine from L-alanine: step 1/1. Its function is as follows. Catalyzes the interconversion of L-alanine and D-alanine. May also act on other amino acids. The sequence is that of Alanine racemase (alr) from Alcanivorax borkumensis (strain ATCC 700651 / DSM 11573 / NCIMB 13689 / SK2).